The primary structure comprises 192 residues: Ion-translocating oxidoreductase complex subunit A (192 aa).

Helical transmembrane passes span 5–25, 39–59, 65–85, 102–122, 134–154, and 171–191; these read LLLL…FLGL, IGMS…SYLV, LPFE…AVVV, ALGI…VALL, AIYG…FSAM, and AIAM…TGLV.

Belongs to the NqrDE/RnfAE family. The complex is composed of six subunits: RnfA, RnfB, RnfC, RnfD, RnfE and RnfG.

It localises to the cell inner membrane. Its function is as follows. Part of a membrane-bound complex that couples electron transfer with translocation of ions across the membrane. This chain is Ion-translocating oxidoreductase complex subunit A, found in Shewanella sediminis (strain HAW-EB3).